Reading from the N-terminus, the 292-residue chain is MFHGSLVALVTPMHEDGRIDEAALERFIEWQIAEGTNGLVPVGTTGESPTLSHDEHKRVVEITVEVARKRVPVIAGAGSNATREAIGLAKHAESVGADGVLVVTPYYNKPTQDGLLRHFTAVADAIGIPLIIYNIPPRSVIDMSVATMARLAQHPNIVGVKDATANLTRPLHTTAACGASFCQLSGEDHTALAFLAAGGVGCISVTANIAPRLCAEMQAAWRAGDLKTAMAIQSRLLPLHDAMFAESNPAPAKYAASLLGFGSEFCRLPLAPLAEATKAQMRAAMTGLGLLA.

Thr45 serves as a coordination point for pyruvate. Catalysis depends on Tyr133, which acts as the Proton donor/acceptor. Lys161 (schiff-base intermediate with substrate) is an active-site residue. Residue Ile203 participates in pyruvate binding.

It belongs to the DapA family. As to quaternary structure, homotetramer; dimer of dimers.

It is found in the cytoplasm. It catalyses the reaction L-aspartate 4-semialdehyde + pyruvate = (2S,4S)-4-hydroxy-2,3,4,5-tetrahydrodipicolinate + H2O + H(+). The protein operates within amino-acid biosynthesis; L-lysine biosynthesis via DAP pathway; (S)-tetrahydrodipicolinate from L-aspartate: step 3/4. Its function is as follows. Catalyzes the condensation of (S)-aspartate-beta-semialdehyde [(S)-ASA] and pyruvate to 4-hydroxy-tetrahydrodipicolinate (HTPA). The chain is 4-hydroxy-tetrahydrodipicolinate synthase from Acidiphilium cryptum (strain JF-5).